Consider the following 543-residue polypeptide: MAKRIIYNEQARRALERGIDILAESVAVTLGPKGRNVVLEKKFGAPQIINDGVTIAKEIELEDHIENTGVALIRQAASKTNDAAGDGTTTATVLAHAMVKAGLKNVAAGANAITLKKGIDKATDFLVEKIKDHSKPISDSNAIAQCGTIAAGNDEEVGKMIADAMDKVGKEGVISLEEGKSMTTELEVTEGMRFDKGYISPYFATDTERMEAVLDEPYILLTDKKIGLVQDLVPVLEQVAKTGKPLLIIAEDIEKEALATLVVNRLRGVLNVAAVKAPGFGDRRKAMLEDMAVLTNGQLITEDAGLKLENATLDMLGTSRRVTINKDTSTIVAEGNEVAVNARCEQIKKQMDETDSTYDKEKLQERLAKLSGGVAVVKVGAATETEMKDKKLRLEDAINATKAAVEEGIVPGGGTTLAHLAPALEDWSSTNLSGEELIGANIVEAALTSPLMRIAENAGANGAVVAENVKSKPVNDGYNAATGEYVDMLSAGIVDPAKVTRSGLQNAASIAGMVLTTECIVADLPEKKDSSPAGGGMGGDFDY.

ATP contacts are provided by residues 29-32 (TLGP), 86-90 (DGTTT), Gly413, 479-481 (NAA), and Asp495.

The protein belongs to the chaperonin (HSP60) family. In terms of assembly, forms a cylinder of 14 subunits composed of two heptameric rings stacked back-to-back. Interacts with the co-chaperonin GroES.

It is found in the cytoplasm. It catalyses the reaction ATP + H2O + a folded polypeptide = ADP + phosphate + an unfolded polypeptide.. Together with its co-chaperonin GroES, plays an essential role in assisting protein folding. The GroEL-GroES system forms a nano-cage that allows encapsulation of the non-native substrate proteins and provides a physical environment optimized to promote and accelerate protein folding. The chain is Chaperonin GroEL 2 from Prochlorococcus marinus (strain NATL1A).